The primary structure comprises 331 residues: Ketol-acid reductoisomerase (NADP(+)) (331 aa).

The 181-residue stretch at 2-182 folds into the KARI N-terminal Rossmann domain; sequence AQLFYDSDAD…GGTRAGILET (181 aa). Residues 25–28, serine 51, serine 53, and 83–86 contribute to the NADP(+) site; these read YGSQ and DEFQ. Residue histidine 108 is part of the active site. Residue glycine 134 participates in NADP(+) binding. Residues 183–328 form the KARI C-terminal knotted domain; it reads NFKEETETDL…KGLRSMFSWL (146 aa). Residues aspartate 191, glutamate 195, glutamate 227, and glutamate 231 each contribute to the Mg(2+) site. A substrate-binding site is contributed by serine 252.

Belongs to the ketol-acid reductoisomerase family. Mg(2+) serves as cofactor.

The enzyme catalyses (2R)-2,3-dihydroxy-3-methylbutanoate + NADP(+) = (2S)-2-acetolactate + NADPH + H(+). It catalyses the reaction (2R,3R)-2,3-dihydroxy-3-methylpentanoate + NADP(+) = (S)-2-ethyl-2-hydroxy-3-oxobutanoate + NADPH + H(+). The protein operates within amino-acid biosynthesis; L-isoleucine biosynthesis; L-isoleucine from 2-oxobutanoate: step 2/4. It participates in amino-acid biosynthesis; L-valine biosynthesis; L-valine from pyruvate: step 2/4. Involved in the biosynthesis of branched-chain amino acids (BCAA). Catalyzes an alkyl-migration followed by a ketol-acid reduction of (S)-2-acetolactate (S2AL) to yield (R)-2,3-dihydroxy-isovalerate. In the isomerase reaction, S2AL is rearranged via a Mg-dependent methyl migration to produce 3-hydroxy-3-methyl-2-ketobutyrate (HMKB). In the reductase reaction, this 2-ketoacid undergoes a metal-dependent reduction by NADPH to yield (R)-2,3-dihydroxy-isovalerate. This Synechococcus sp. (strain CC9311) protein is Ketol-acid reductoisomerase (NADP(+)).